The sequence spans 308 residues: Glycosyltransferase 6 domain-containing protein 1 (308 aa).

The Cytoplasmic segment spans residues 1–6 (MNSKRM). A helical; Signal-anchor for type II membrane protein membrane pass occupies residues 7–23 (LLLVLFAFSLMLVERYF). Residues 24–308 (RNHQVEELRL…KVAHDSHRKL (285 aa)) lie on the Lumenal side of the membrane. An N-linked (GlcNAc...) asparagine glycan is attached at Asn-74. Substrate is bound by residues 82–87 (FATGRF), 173–175 (AVN), and 195–198 (HAWW). Glu-263 (nucleophile) is an active-site residue.

It belongs to the glycosyltransferase 6 family. The cofactor is Mn(2+).

The protein localises to the membrane. The sequence is that of Glycosyltransferase 6 domain-containing protein 1 (GLT6D1) from Macaca fascicularis (Crab-eating macaque).